The following is a 198-amino-acid chain: Recombination protein RecR (198 aa).

The C4-type zinc-finger motif lies at Cys-57 to Cys-72. The Toprim domain maps to Ser-80–Ser-175.

This sequence belongs to the RecR family.

In terms of biological role, may play a role in DNA repair. It seems to be involved in an RecBC-independent recombinational process of DNA repair. It may act with RecF and RecO. The chain is Recombination protein RecR from Staphylococcus epidermidis (strain ATCC 35984 / DSM 28319 / BCRC 17069 / CCUG 31568 / BM 3577 / RP62A).